A 103-amino-acid chain; its full sequence is Small ribosomal subunit protein uS10 (103 aa).

It belongs to the universal ribosomal protein uS10 family. As to quaternary structure, part of the 30S ribosomal subunit.

Functionally, involved in the binding of tRNA to the ribosomes. The chain is Small ribosomal subunit protein uS10 from Acetivibrio thermocellus (strain ATCC 27405 / DSM 1237 / JCM 9322 / NBRC 103400 / NCIMB 10682 / NRRL B-4536 / VPI 7372) (Clostridium thermocellum).